Reading from the N-terminus, the 372-residue chain is Small ribosomal subunit protein mS77 (rPPR2) (372 aa).

The N-terminal 28 residues, 1 to 28 (MKSFLLSRQAIHRISLLSSKTPTFCRNF), are a transit peptide targeting the mitochondrion. The tract at residues 240 to 265 (DNSIRESETVDGEVEEEGFVPSDEVE) is disordered. Over residues 248–257 (TVDGEVEEEG) the composition is skewed to acidic residues.

Component of the mitochondrial ribosome small subunit.

It is found in the mitochondrion. In terms of biological role, required for karyogamy during female gametophyte development, when the two polar nuclei fuse to form the diploid central cell nucleus. This chain is Small ribosomal subunit protein mS77 (rPPR2), found in Arabidopsis thaliana (Mouse-ear cress).